A 21-amino-acid chain; its full sequence is Hydroxypicolinic acid-activating enzyme (21 aa).

Its function is as follows. Involved in etamycin biosynthesis. This is Hydroxypicolinic acid-activating enzyme from Streptomyces griseoviridis.